Consider the following 73-residue polypeptide: UPF0435 protein lmo1707 (73 aa).

It belongs to the UPF0435 family.

The sequence is that of UPF0435 protein lmo1707 from Listeria monocytogenes serovar 1/2a (strain ATCC BAA-679 / EGD-e).